The chain runs to 316 residues: Homoserine kinase (316 aa).

97–107 (PHSRGLGSSAA) contacts ATP.

Belongs to the GHMP kinase family. Homoserine kinase subfamily.

It is found in the cytoplasm. It carries out the reaction L-homoserine + ATP = O-phospho-L-homoserine + ADP + H(+). Its pathway is amino-acid biosynthesis; L-threonine biosynthesis; L-threonine from L-aspartate: step 4/5. Its function is as follows. Catalyzes the ATP-dependent phosphorylation of L-homoserine to L-homoserine phosphate. This is Homoserine kinase from Mycobacterium tuberculosis (strain ATCC 25618 / H37Rv).